The following is a 514-amino-acid chain: Protein p59 (514 aa).

The protein localises to the virion. The protein is Protein p59 of Lettuce infectious yellows virus (isolate United States/92) (LIYV).